Consider the following 530-residue polypeptide: Histone-arginine methyltransferase CARMER (530 aa).

One can recognise an SAM-dependent MTase PRMT-type domain in the interval 141-450; it reads ASQYFQFYGY…QSYDVTIDLH (310 aa). Positions 154, 163, 187, 209, 238, and 266 each coordinate S-adenosyl-L-methionine. Arginine 501 bears the Asymmetric dimethylarginine; by autocatalysis mark.

Belongs to the class I-like SAM-binding methyltransferase superfamily. Protein arginine N-methyltransferase family. In terms of assembly, homodimer. The dimethylated protein is the major form.

Its subcellular location is the cytoplasm. It is found in the nucleus. The catalysed reaction is L-arginyl-[protein] + 2 S-adenosyl-L-methionine = N(omega),N(omega)-dimethyl-L-arginyl-[protein] + 2 S-adenosyl-L-homocysteine + 2 H(+). In terms of biological role, methylates (mono- and asymmetric dimethylation) the guanidino nitrogens of arginyl residues in proteins. May methylate histone H3 at 'Arg-17' and activate transcription via chromatin remodeling. The polypeptide is Histone-arginine methyltransferase CARMER (Art4) (Drosophila simulans (Fruit fly)).